We begin with the raw amino-acid sequence, 143 residues long: Large ribosomal subunit protein uL15 (143 aa).

The disordered stretch occupies residues 1 to 47 (MKLHELTPSEGSRFSRRRIGRGDSSGQGKTSGRGQKGQKARGKVRVG). Residues 23-35 (DSSGQGKTSGRGQ) show a composition bias toward gly residues.

Belongs to the universal ribosomal protein uL15 family. Part of the 50S ribosomal subunit.

Functionally, binds to the 23S rRNA. The protein is Large ribosomal subunit protein uL15 of Lactiplantibacillus plantarum (strain ATCC BAA-793 / NCIMB 8826 / WCFS1) (Lactobacillus plantarum).